Consider the following 660-residue polypeptide: tRNA 5-methylaminomethyl-2-thiouridine biosynthesis bifunctional protein MnmC (660 aa).

Positions 1 to 233 (MTHSHAQLVW…KRHISHGWIA (233 aa)) are tRNA (mnm(5)s(2)U34)-methyltransferase. An FAD-dependent cmnm(5)s(2)U34 oxidoreductase region spans residues 260–660 (VGGGLAGAAS…IRRKLDPDAL (401 aa)).

It in the N-terminal section; belongs to the methyltransferase superfamily. tRNA (mnm(5)s(2)U34)-methyltransferase family. This sequence in the C-terminal section; belongs to the DAO family. FAD is required as a cofactor.

The protein localises to the cytoplasm. It catalyses the reaction 5-aminomethyl-2-thiouridine(34) in tRNA + S-adenosyl-L-methionine = 5-methylaminomethyl-2-thiouridine(34) in tRNA + S-adenosyl-L-homocysteine + H(+). Catalyzes the last two steps in the biosynthesis of 5-methylaminomethyl-2-thiouridine (mnm(5)s(2)U) at the wobble position (U34) in tRNA. Catalyzes the FAD-dependent demodification of cmnm(5)s(2)U34 to nm(5)s(2)U34, followed by the transfer of a methyl group from S-adenosyl-L-methionine to nm(5)s(2)U34, to form mnm(5)s(2)U34. The sequence is that of tRNA 5-methylaminomethyl-2-thiouridine biosynthesis bifunctional protein MnmC from Chromobacterium violaceum (strain ATCC 12472 / DSM 30191 / JCM 1249 / CCUG 213 / NBRC 12614 / NCIMB 9131 / NCTC 9757 / MK).